The following is a 544-amino-acid chain: Serine/threonine-protein kinase PAK 1 (544 aa).

The interval 1 to 79 (MSNNGLDVQD…KERPEISLPS (79 aa)) is disordered. Serine 2 is modified (N-acetylserine). Position 21 is a phosphoserine; by PKB and autocatalysis (serine 21). Serine 57 is modified (phosphoserine; by autocatalysis). A compositionally biased stretch (basic and acidic residues) spans 68 to 79 (KEKERPEISLPS). The tract at residues 70-140 (KERPEISLPS…YNSKKTSNSQ (71 aa)) is autoregulatory region. One can recognise a CRIB domain in the interval 75 to 88 (ISLPSDFEHTIHVG). Positions 75-105 (ISLPSDFEHTIHVGFDAVTGEFTGMPEQWAR) are GTPase-binding. A Phosphothreonine; by OXSR1 modification is found at threonine 84. Serine 115 carries the phosphoserine modification. Residues tyrosine 131 and tyrosine 142 each carry the phosphotyrosine modification. Residues serine 144 and serine 149 each carry the phosphoserine; by autocatalysis modification. Polar residues predominate over residues 150-166 (AEDYNSSNTLNVKTVSE). Residues 150–195 (AEDYNSSNTLNVKTVSETPAVPPVSEDEDDDDDATPPPVIAPRPEH) are disordered. Tyrosine 153 is subject to Phosphotyrosine; by JAK2. Serine 174 is subject to Phosphoserine. Acidic residues predominate over residues 174-183 (SEDEDDDDDA). At threonine 184 the chain carries Phosphothreonine. The residue at position 198 (serine 198) is a Phosphoserine; by autocatalysis. Position 200 is a phosphotyrosine; by JAK2 (tyrosine 200). Position 203 is a phosphoserine; by autocatalysis (serine 203). The interval 209-250 (PVTPTRDVATSPISPTENNTTPPDALTRNTEKQKKKPKMSDE) is disordered. Phosphothreonine occurs at positions 211 and 218. Phosphoserine is present on residues serine 219 and serine 222. Over residues 219–230 (SPISPTENNTTP) the composition is skewed to polar residues. 3 positions are modified to phosphothreonine: threonine 224, threonine 228, and threonine 229. The 252-residue stretch at 269 to 520 (YTRFEKIGQG…AKELLQHQFL (252 aa)) folds into the Protein kinase domain. 275-283 (IGQGASGTV) lines the ATP pocket. Tyrosine 284 carries the post-translational modification Phosphotyrosine; by JAK2. Lysine 298 contributes to the ATP binding site. Aspartate 388 serves as the catalytic Proton acceptor. Phosphothreonine; by autocatalysis, BRSK2 and PDPK1 is present on threonine 422.

This sequence belongs to the protein kinase superfamily. STE Ser/Thr protein kinase family. STE20 subfamily. As to quaternary structure, homodimer in its autoinhibited state. Active as monomer. Interacts with GIT1. Component of cytoplasmic complexes, which also contains PXN, ARHGEF7 and GIT1. Interacts with NISCH. Interacts with DVL1; mediates the formation of a DVL1, MUSK and PAK1 ternary complex involved in AChR clustering. Binds to the caspase-cleaved p110 isoform of CDC2L1 and CDC2L2, p110C, but not the full-length proteins. Interacts with ARHGEF7. Interacts with SCRIB. Interacts with PDPK1. Interacts (via kinase domain) with RAF1. Interacts with NCK1 and NCK2. Interacts with TBCB. Interacts with BRSK2. Interacts tightly with GTP-bound but not GDP-bound CDC42/P21 and RAC1. Interacts with SNAI1. Interacts with CIB1 (via N-terminal region); the interaction is direct, promotes PAK1 activity and occurs in a calcium-dependent manner. Interacts with INPP5K. Interacts with gamma-tubulin. Interacts with RHOU; the interaction promotes PAK1 activation. Mg(2+) serves as cofactor. Autophosphorylated in trans, meaning that in a dimer, one kinase molecule phosphorylates the other one. Activated by autophosphorylation at Thr-422 in response to a conformation change, triggered by interaction with GTP-bound CDC42 or RAC1. Activated by phosphorylation at Thr-422 by PDPK1. Phosphorylated by JAK2 in response to PRL; this increases PAK1 kinase activity. Phosphorylated at Ser-21 by PKB/AKT; this reduces interaction with NCK1 and association with focal adhesion sites. Activated by phosphorylation at Thr-422 by BRSK2. Upon DNA damage, phosphorylated at Thr-211 and translocates to the nucleoplasm. Phosphorylated at tyrosine residues, which can be enhanced by NTN1. As to expression, expressed predominantly in the brain, with higher expression in neuronal groups associated with motor function, and at lower levels in the spleen.

Its subcellular location is the cytoplasm. The protein resides in the cell junction. The protein localises to the focal adhesion. It localises to the cell projection. It is found in the lamellipodium. Its subcellular location is the cell membrane. The protein resides in the ruffle membrane. The protein localises to the invadopodium. It localises to the nucleus. It is found in the nucleoplasm. Its subcellular location is the chromosome. The protein resides in the cytoskeleton. The protein localises to the microtubule organizing center. It localises to the centrosome. It catalyses the reaction L-seryl-[protein] + ATP = O-phospho-L-seryl-[protein] + ADP + H(+). The catalysed reaction is L-threonyl-[protein] + ATP = O-phospho-L-threonyl-[protein] + ADP + H(+). Phosphorylation of Thr-84 by OXSR1 inhibits activation. Activated by binding small G proteins. Binding of GTP-bound CDC42 or RAC1 to the autoregulatory region releases monomers from the autoinhibited dimer, and enables activation by phosphorylation of Thr-422. Functionally, protein kinase involved in intracellular signaling pathways downstream of integrins and receptor-type kinases that plays an important role in cytoskeleton dynamics, in cell adhesion, migration, proliferation, apoptosis, mitosis, and in vesicle-mediated transport processes. Can directly phosphorylate BAD and protects cells against apoptosis. Activated by interaction with CDC42 and RAC1. Functions as a GTPase effector that links the Rho-related GTPases CDC42 and RAC1 to the JNK MAP kinase pathway. Phosphorylates and activates MAP2K1, and thereby mediates activation of downstream MAP kinases. Involved in the reorganization of the actin cytoskeleton, actin stress fibers and of focal adhesion complexes. Phosphorylates the tubulin chaperone TBCB and thereby plays a role in the regulation of microtubule biogenesis and organization of the tubulin cytoskeleton. Plays a role in the regulation of insulin secretion in response to elevated glucose levels. Part of a ternary complex that contains PAK1, DVL1 and MUSK that is important for MUSK-dependent regulation of AChR clustering during the formation of the neuromuscular junction (NMJ). Activity is inhibited in cells undergoing apoptosis, potentially due to binding of CDC2L1 and CDC2L2. Phosphorylates MYL9/MLC2. Phosphorylates RAF1 at 'Ser-338' and 'Ser-339' resulting in: activation of RAF1, stimulation of RAF1 translocation to mitochondria, phosphorylation of BAD by RAF1, and RAF1 binding to BCL2. Phosphorylates SNAI1 at 'Ser-246' promoting its transcriptional repressor activity by increasing its accumulation in the nucleus. In podocytes, promotes NR3C2 nuclear localization. Required for atypical chemokine receptor ACKR2-induced phosphorylation of LIMK1 and cofilin (CFL1) and for the up-regulation of ACKR2 from endosomal compartment to cell membrane, increasing its efficiency in chemokine uptake and degradation. In synapses, seems to mediate the regulation of F-actin cluster formation performed by SHANK3, maybe through CFL1 phosphorylation and inactivation. Plays a role in RUFY3-mediated facilitating gastric cancer cells migration and invasion. In response to DNA damage, phosphorylates MORC2 which activates its ATPase activity and facilitates chromatin remodeling. In neurons, plays a crucial role in regulating GABA(A) receptor synaptic stability and hence GABAergic inhibitory synaptic transmission through its role in F-actin stabilization. In hippocampal neurons, necessary for the formation of dendritic spines and excitatory synapses; this function is dependent on kinase activity and may be exerted by the regulation of actomyosin contractility through the phosphorylation of myosin II regulatory light chain (MLC). Along with GIT1, positively regulates microtubule nucleation during interphase. Phosphorylates FXR1, promoting its localization to stress granules and activity. Phosphorylates ILK on 'Thr-173' and 'Ser-246', promoting nuclear export of ILK. This Rattus norvegicus (Rat) protein is Serine/threonine-protein kinase PAK 1.